A 388-amino-acid polypeptide reads, in one-letter code: Nitric oxide reductase FlRd-NAD(+) reductase (388 aa).

Belongs to the FAD-dependent oxidoreductase family. The cofactor is FAD.

It is found in the cytoplasm. The enzyme catalyses 2 reduced [nitric oxide reductase rubredoxin domain] + NAD(+) + H(+) = 2 oxidized [nitric oxide reductase rubredoxin domain] + NADH. It functions in the pathway nitrogen metabolism; nitric oxide reduction. Its function is as follows. One of at least two accessory proteins for anaerobic nitric oxide (NO) reductase. Reduces the rubredoxin moiety of NO reductase. The sequence is that of Nitric oxide reductase FlRd-NAD(+) reductase from Aeromonas salmonicida (strain A449).